The sequence spans 178 residues: MSRIGFAPVSVPSGVTVTINGQNVEVKGPKGTLNTDIPAPIAVAQEGDEIVVSRPDDHRKNRSLHGLSRSLVNNMVVGVTEGYTTKMEIFGVGYRVQLKGKDLEFSLGYSHPILIKADEGITFAVDGNTKFSISGIDKQKVGQIAANIRGLRKDDPYKGKGIRYEGEQVRRKVGKTGK.

The protein belongs to the universal ribosomal protein uL6 family. As to quaternary structure, part of the 50S ribosomal subunit.

Functionally, this protein binds to the 23S rRNA, and is important in its secondary structure. It is located near the subunit interface in the base of the L7/L12 stalk, and near the tRNA binding site of the peptidyltransferase center. The sequence is that of Large ribosomal subunit protein uL6 from Corynebacterium urealyticum (strain ATCC 43042 / DSM 7109).